Consider the following 79-residue polypeptide: uncharacterized protein (79 aa).

A signal peptide spans 1 to 33; that stretch reads MRFIIRTVMLIALVWIGLLLSGYGVLIGSKENA.

This is an uncharacterized protein from Escherichia coli O157:H7.